A 491-amino-acid chain; its full sequence is Nicotinamide phosphoribosyltransferase (491 aa).

N-acetylmethionine is present on M1. Position 188 is a phosphotyrosine (Y188). A diphosphate-binding site is contributed by R196. Beta-nicotinamide D-ribonucleotide is bound at residue D219. Diphosphate contacts are provided by H247 and R311. Residues 311-313 (RPD), 353-354 (GD), G384, and R392 contribute to the beta-nicotinamide D-ribonucleotide site. Position 472 is a phosphoserine (S472).

The protein belongs to the NAPRTase family. In terms of assembly, homodimer. As to expression, ubiquitously expressed in lymphoid and non-lymphoid tissues.

The protein localises to the nucleus. The protein resides in the cytoplasm. It is found in the secreted. The enzyme catalyses beta-nicotinamide D-ribonucleotide + diphosphate = 5-phospho-alpha-D-ribose 1-diphosphate + nicotinamide + H(+). Its pathway is cofactor biosynthesis; NAD(+) biosynthesis; nicotinamide D-ribonucleotide from 5-phospho-alpha-D-ribose 1-diphosphate and nicotinamide: step 1/1. The secreted form behaves both as a cytokine with immunomodulating properties and an adipokine with anti-diabetic properties, it has no enzymatic activity, partly because of lack of activation by ATP, which has a low level in extracellular space and plasma. Catalyzes the condensation of nicotinamide with 5-phosphoribosyl-1-pyrophosphate to yield nicotinamide mononucleotide, an intermediate in the biosynthesis of NAD. It is the rate limiting component in the mammalian NAD biosynthesis pathway. Plays a role in the modulation of circadian clock function. NAMPT-dependent oscillatory production of NAD regulates oscillation of clock target gene expression by releasing the core clock component: CLOCK-BMAL1 heterodimer from NAD-dependent SIRT1-mediated suppression. In Mus musculus (Mouse), this protein is Nicotinamide phosphoribosyltransferase (Nampt).